A 356-amino-acid chain; its full sequence is Dual-specificity RNA methyltransferase RlmN (356 aa).

E87 serves as the catalytic Proton acceptor. The 234-residue stretch at 106 to 339 (QEAKYTICVS…CTIRDSKGID (234 aa)) folds into the Radical SAM core domain. A disulfide bond links C113 and C344. Residues C120, C124, and C127 each coordinate [4Fe-4S] cluster. Residues 170–171 (GE), S202, 225–227 (SLH), and N301 contribute to the S-adenosyl-L-methionine site. C344 serves as the catalytic S-methylcysteine intermediate.

The protein belongs to the radical SAM superfamily. RlmN family. It depends on [4Fe-4S] cluster as a cofactor.

It is found in the cytoplasm. The enzyme catalyses adenosine(2503) in 23S rRNA + 2 reduced [2Fe-2S]-[ferredoxin] + 2 S-adenosyl-L-methionine = 2-methyladenosine(2503) in 23S rRNA + 5'-deoxyadenosine + L-methionine + 2 oxidized [2Fe-2S]-[ferredoxin] + S-adenosyl-L-homocysteine. It carries out the reaction adenosine(37) in tRNA + 2 reduced [2Fe-2S]-[ferredoxin] + 2 S-adenosyl-L-methionine = 2-methyladenosine(37) in tRNA + 5'-deoxyadenosine + L-methionine + 2 oxidized [2Fe-2S]-[ferredoxin] + S-adenosyl-L-homocysteine. Specifically methylates position 2 of adenine 2503 in 23S rRNA and position 2 of adenine 37 in tRNAs. m2A2503 modification seems to play a crucial role in the proofreading step occurring at the peptidyl transferase center and thus would serve to optimize ribosomal fidelity. This Sulfurimonas denitrificans (strain ATCC 33889 / DSM 1251) (Thiomicrospira denitrificans (strain ATCC 33889 / DSM 1251)) protein is Dual-specificity RNA methyltransferase RlmN.